Reading from the N-terminus, the 111-residue chain is Universal stress protein B (111 aa).

The next 2 helical transmembrane spans lie at 1–21 and 90–110; these read MIST…NMAR and FLLT…LMIW.

It belongs to the universal stress protein B family.

It localises to the cell inner membrane. In Salmonella arizonae (strain ATCC BAA-731 / CDC346-86 / RSK2980), this protein is Universal stress protein B.